The following is a 252-amino-acid chain: GTP cyclohydrolase 1 type 2 homolog (252 aa).

Residues H65, H66, D103, H220, and E224 each contribute to the a divalent metal cation site.

This sequence belongs to the GTP cyclohydrolase I type 2/NIF3 family. In terms of assembly, homohexamer.

The chain is GTP cyclohydrolase 1 type 2 homolog from Pseudomonas aeruginosa (strain ATCC 15692 / DSM 22644 / CIP 104116 / JCM 14847 / LMG 12228 / 1C / PRS 101 / PAO1).